Consider the following 520-residue polypeptide: D-aminopeptidase (520 aa).

The active-site Nucleophile is the serine 62. Lysine 65 functions as the Proton donor/acceptor in the catalytic mechanism. The important for specificity stretch occupies residues 477–487 (QRSMDAPSPGE). Aspartate 481 is a substrate binding site.

This sequence belongs to the peptidase S12 family. As to quaternary structure, homodimer.

The catalysed reaction is Release of an N-terminal D-amino acid from a peptide, Xaa-|-Yaa-, in which Xaa is preferably D-Ala, D-Ser or D-Thr. D-amino acid amides and methyl esters also are hydrolyzed, as is glycine amide.. Its activity is regulated as follows. Inhibited by beta-lactam compounds such as 6-aminopenicillic acid, 7-aminocephalosporanic acid, benzylpenicillin and ampicillin. Inhibited by p-chloromercuribenzoate. In terms of biological role, hydrolyzes N-terminal residues in D-amino acid-containing peptides. The protein is D-aminopeptidase of Brucella anthropi (strain ATCC 49188 / DSM 6882 / CCUG 24695 / JCM 21032 / LMG 3331 / NBRC 15819 / NCTC 12168 / Alc 37) (Ochrobactrum anthropi).